The following is a 62-amino-acid chain: MAKKLEITLTRSLIGRPQDQRVTVNTLGLRKMHQTVVQEDNAAIRGMVNKVSHLVTVKEIEA.

Belongs to the universal ribosomal protein uL30 family. As to quaternary structure, part of the 50S ribosomal subunit.

The protein is Large ribosomal subunit protein uL30 of Halalkalibacterium halodurans (strain ATCC BAA-125 / DSM 18197 / FERM 7344 / JCM 9153 / C-125) (Bacillus halodurans).